The primary structure comprises 303 residues: Methionyl-tRNA formyltransferase (303 aa).

108-111 (SDLP) serves as a coordination point for (6S)-5,6,7,8-tetrahydrofolate.

The protein belongs to the Fmt family.

It catalyses the reaction L-methionyl-tRNA(fMet) + (6R)-10-formyltetrahydrofolate = N-formyl-L-methionyl-tRNA(fMet) + (6S)-5,6,7,8-tetrahydrofolate + H(+). Attaches a formyl group to the free amino group of methionyl-tRNA(fMet). The formyl group appears to play a dual role in the initiator identity of N-formylmethionyl-tRNA by promoting its recognition by IF2 and preventing the misappropriation of this tRNA by the elongation apparatus. This Rickettsia rickettsii (strain Iowa) protein is Methionyl-tRNA formyltransferase.